Consider the following 420-residue polypeptide: UDP-N-acetylglucosamine 1-carboxyvinyltransferase (420 aa).

Lys22–Asn23 is a binding site for phosphoenolpyruvate. Arg91 is a UDP-N-acetyl-alpha-D-glucosamine binding site. Residue Cys115 is the Proton donor of the active site. At Cys115 the chain carries 2-(S-cysteinyl)pyruvic acid O-phosphothioketal. Residues Arg120–Leu124, Lys160–Val163, Asp305, and Ile327 contribute to the UDP-N-acetyl-alpha-D-glucosamine site.

Belongs to the EPSP synthase family. MurA subfamily.

It localises to the cytoplasm. It carries out the reaction phosphoenolpyruvate + UDP-N-acetyl-alpha-D-glucosamine = UDP-N-acetyl-3-O-(1-carboxyvinyl)-alpha-D-glucosamine + phosphate. It participates in cell wall biogenesis; peptidoglycan biosynthesis. Its function is as follows. Cell wall formation. Adds enolpyruvyl to UDP-N-acetylglucosamine. This Proteus mirabilis (strain HI4320) protein is UDP-N-acetylglucosamine 1-carboxyvinyltransferase.